We begin with the raw amino-acid sequence, 459 residues long: N(6)-adenosine-methyltransferase non-catalytic subunit METTL14 (459 aa).

The disordered stretch occupies residues 50–73; it reads TCRASYDTSAPNAKRKYPDEGEAD. Interaction with METTL3 regions lie at residues 135-136 and 237-238; these read RD and SG. The interval 245–254 is positively charged region required for RNA-binding; the sequence is RVCLRKWGYR. Interaction with METTL3 stretches follow at residues 255–258 and 278–287; these read RCED and KAVFQRTKEH. The segment at 297–298 is positively charged region required for RNA-binding; sequence RR. The interaction with METTL3 stretch occupies residues 308–312; sequence NVDID. The interval 392 to 459 is disordered; that stretch reads IERLRPKSPP…GTHRGGFPTR (68 aa). Residues 409-423 show a composition bias toward gly residues; it reads GGGAPRGGGRGGTSA. The segment covering 425–443 has biased composition (basic and acidic residues); that stretch reads RGERGRERNRTNFRGERGG. Positions 444–453 are enriched in gly residues; it reads FRGGRGGTHR.

It belongs to the MT-A70-like family. As to quaternary structure, heterodimer; heterodimerizes with METTL3 to form an antiparallel heterodimer that constitutes an active methyltransferase. Component of the WMM complex, a N6-methyltransferase complex composed of a catalytic subcomplex, named MAC, and of an associated subcomplex, named MACOM. The MAC subcomplex is composed of METTL3 and METTL14.

It localises to the nucleus. Functionally, the METTL3-METTL14 heterodimer forms a N6-methyltransferase complex that methylates adenosine residues at the N(6) position of some mRNAs and regulates the circadian clock, differentiation of embryonic stem cells and cortical neurogenesis. In the heterodimer formed with METTL3, METTL14 constitutes the RNA-binding scaffold that recognizes the substrate rather than the catalytic core. N6-methyladenosine (m6A), which takes place at the 5'-[AG]GAC-3' consensus sites of some mRNAs, plays a role in mRNA stability and processing. This Gallus gallus (Chicken) protein is N(6)-adenosine-methyltransferase non-catalytic subunit METTL14 (METTL14).